Here is a 663-residue protein sequence, read N- to C-terminus: Glutamate-rich protein 6 (663 aa).

Disordered stretches follow at residues 1 to 74 and 106 to 136; these read MAHL…ETFS and LTSTFVPSQSATSTETPSASPPSSTSSHKSF. Residues 20 to 69 are compositionally biased toward acidic residues; sequence ESEEELEEEEEEEEVEEEEEEVEEEEEEVEEEEEEVVEEELVGEEQELEA. Residues 112 to 132 show a composition bias toward low complexity; sequence PSQSATSTETPSASPPSSTSS.

Belongs to the ERICH6 family.

The protein localises to the nucleus. The polypeptide is Glutamate-rich protein 6 (ERICH6) (Homo sapiens (Human)).